The sequence spans 168 residues: Protein GRE1 (168 aa).

The segment at Met-1–Trp-168 is disordered. 2 stretches are compositionally biased toward basic and acidic residues: residues Phe-8–Arg-20 and Asp-27–Arg-43. Polar residues-rich tracts occupy residues Asn-56–Phe-81 and Thr-120–Gly-144.

The protein resides in the cytoplasm. In Saccharomyces cerevisiae (strain ATCC 204508 / S288c) (Baker's yeast), this protein is Protein GRE1 (GRE1).